The primary structure comprises 607 residues: WD repeat-containing protein 1-A (607 aa).

WD repeat units follow at residues 4–45 (ELKK…IRNI), 48–87 (PAIA…IWDT), 93–135 (LLKY…LWDT), 138–176 (SVGE…FLEG), 180–218 (KFKF…LYDG), 224–263 (VCSL…IWDV), 270–306 (TTFN…YLDK), 311–351 (RPLR…YWDA), 358–408 (TFTG…KMDV), 432–474 (LKDK…LYSI), 480–518 (KDEG…VFSV), 523–561 (SEKN…VWTL), and 566–604 (TRIK…QWTV).

It belongs to the WD repeat AIP1 family.

Its subcellular location is the cell membrane. The protein localises to the cytoplasm. It localises to the cytoskeleton. It is found in the nucleus. Induces disassembly of actin filaments in conjunction with ADF/cofilin family proteins. Doesn't sever actin filaments alone, but caps the barbed ends of filaments severed by cofilin, which blocks annealing and depolymerization and allows more extensive severing by cofilin. The protein is WD repeat-containing protein 1-A (wdr1-a) of Xenopus laevis (African clawed frog).